Reading from the N-terminus, the 249-residue chain is Type III pantothenate kinase (249 aa).

6-13 (DCGNSFIK) serves as a coordination point for ATP. Residues tyrosine 93 and 100-103 (GLDR) contribute to the substrate site. Residue aspartate 102 is the Proton acceptor of the active site. Aspartate 122 is a binding site for K(+). ATP is bound at residue threonine 125. Threonine 181 serves as a coordination point for substrate.

This sequence belongs to the type III pantothenate kinase family. As to quaternary structure, homodimer. NH4(+) serves as cofactor. It depends on K(+) as a cofactor.

The protein localises to the cytoplasm. The catalysed reaction is (R)-pantothenate + ATP = (R)-4'-phosphopantothenate + ADP + H(+). It functions in the pathway cofactor biosynthesis; coenzyme A biosynthesis; CoA from (R)-pantothenate: step 1/5. Catalyzes the phosphorylation of pantothenate (Pan), the first step in CoA biosynthesis. The sequence is that of Type III pantothenate kinase from Pseudomonas savastanoi pv. phaseolicola (strain 1448A / Race 6) (Pseudomonas syringae pv. phaseolicola (strain 1448A / Race 6)).